The following is a 423-amino-acid chain: UDP-N-acetylmuramoylalanine--D-glutamate ligase (423 aa).

112–118 is an ATP binding site; the sequence is GSVGKST.

It belongs to the MurCDEF family.

It localises to the cytoplasm. The enzyme catalyses UDP-N-acetyl-alpha-D-muramoyl-L-alanine + D-glutamate + ATP = UDP-N-acetyl-alpha-D-muramoyl-L-alanyl-D-glutamate + ADP + phosphate + H(+). Its pathway is cell wall biogenesis; peptidoglycan biosynthesis. Functionally, cell wall formation. Catalyzes the addition of glutamate to the nucleotide precursor UDP-N-acetylmuramoyl-L-alanine (UMA). This chain is UDP-N-acetylmuramoylalanine--D-glutamate ligase, found in Thermosipho africanus (strain TCF52B).